The following is a 396-amino-acid chain: Pinosylvin synthase 1 (396 aa).

Substrate is bound at residue 60–63; sequence KFKR. Cys170 is a catalytic residue. Substrate contacts are provided by residues Leu273 and 311 to 313; that span reads GGH.

This sequence belongs to the thiolase-like superfamily. Chalcone/stilbene synthases family. As to quaternary structure, homodimer.

The protein resides in the cytoplasm. It carries out the reaction (E)-cinnamoyl-CoA + 3 malonyl-CoA + 3 H(+) = (E)-pinosylvin + 4 CO2 + 4 CoA. It catalyses the reaction 3-phenylpropanoyl-CoA + 3 malonyl-CoA + 3 H(+) = dihydropinosylvin + 4 CO2 + 4 CoA. The protein operates within phytoalexin biosynthesis; pinosylvin biosynthesis. Functionally, catalyzes the production of pinosylvin from cinnamoyl-CoA and malonyl-CoA, and dihydropinosylvin from dihydrocinnamoyl-CoA. This Pinus strobus (Eastern white pine) protein is Pinosylvin synthase 1.